The sequence spans 475 residues: Rho GTPase-activating protein 15 (475 aa).

Positions 1-22 (MERSTTSDTASEKPNPSHSTGA) are disordered. The PH domain maps to 80–190 (VVEKEGYLLK…WFHAIKNAID (111 aa)). One can recognise a Rho-GAP domain in the interval 281-470 (SHLHLVCEHE…LMLSEYSKIF (190 aa)).

The protein localises to the cytoplasm. It localises to the membrane. Its function is as follows. GTPase activator for the Rho-type GTPases by converting them to an inactive GDP-bound state. In Gallus gallus (Chicken), this protein is Rho GTPase-activating protein 15 (ARHGAP15).